Here is a 276-residue protein sequence, read N- to C-terminus: Pantothenate synthetase (276 aa).

27–34 (MGALHRGH) contacts ATP. Residue His34 is the Proton donor of the active site. Gln58 contributes to the (R)-pantoate binding site. Gln58 serves as a coordination point for beta-alanine. An ATP-binding site is contributed by 147-150 (GKKD). A (R)-pantoate-binding site is contributed by Gln153. Residues Val176 and 184 to 187 (LSSR) each bind ATP.

Belongs to the pantothenate synthetase family. As to quaternary structure, homodimer.

The protein resides in the cytoplasm. It catalyses the reaction (R)-pantoate + beta-alanine + ATP = (R)-pantothenate + AMP + diphosphate + H(+). It functions in the pathway cofactor biosynthesis; (R)-pantothenate biosynthesis; (R)-pantothenate from (R)-pantoate and beta-alanine: step 1/1. Its function is as follows. Catalyzes the condensation of pantoate with beta-alanine in an ATP-dependent reaction via a pantoyl-adenylate intermediate. In Helicobacter pylori (strain G27), this protein is Pantothenate synthetase.